Reading from the N-terminus, the 366-residue chain is Alanine racemase (366 aa).

Catalysis depends on Lys40, which acts as the Proton acceptor; specific for D-alanine. Position 40 is an N6-(pyridoxal phosphate)lysine (Lys40). Arg136 is a substrate binding site. Catalysis depends on Tyr263, which acts as the Proton acceptor; specific for L-alanine. Substrate is bound at residue Met310.

The protein belongs to the alanine racemase family. Pyridoxal 5'-phosphate serves as cofactor.

It carries out the reaction L-alanine = D-alanine. Its pathway is amino-acid biosynthesis; D-alanine biosynthesis; D-alanine from L-alanine: step 1/1. Its function is as follows. Catalyzes the interconversion of L-alanine and D-alanine. May also act on other amino acids. The chain is Alanine racemase (alr) from Streptococcus equi subsp. zooepidemicus (strain H70).